The sequence spans 834 residues: Protein ROOT HAIR DEFECTIVE 3 homolog 2 (834 aa).

At 1–683 (MGENDDGCST…EAHKRNNNWL (683 aa)) the chain is on the cytoplasmic side. The region spanning 37–252 (GLSYAVVAIM…ISPGGLAGDR (216 aa)) is the GB1/RHD3-type G domain. 47–54 (GPQSSGKS) contacts GTP. A coiled-coil region spans residues 214–241 (MIVALSSYEEKEKQFEQEVAELRQRFFH). A helical transmembrane segment spans residues 684 to 704 (PPAWAIVLMIVLGFNEFMMLL). The Lumenal segment spans residues 705-707 (KNP). The chain crosses the membrane as a helical span at residues 708 to 728 (LYLLGFFVAFLLSKALWVQLD). Topologically, residues 729–834 (IPREFQHGAV…NVQESEISQM (106 aa)) are cytoplasmic. Over residues 767 to 783 (TTQEVPDLSASQTYRQQ) the composition is skewed to polar residues. The segment at 767–834 (TTQEVPDLSA…NVQESEISQM (68 aa)) is disordered. Over residues 784–803 (SPSHSISSTISESVASNISS) the composition is skewed to low complexity. The segment covering 823-834 (TNNVQESEISQM) has biased composition (polar residues).

This sequence belongs to the TRAFAC class dynamin-like GTPase superfamily. GB1/RHD3 GTPase family. RHD3 subfamily. Expressed in roots, leaves, stems and flowers.

Its subcellular location is the endoplasmic reticulum membrane. Its function is as follows. Probable GTP-binding protein that may be involved in cell development. The protein is Protein ROOT HAIR DEFECTIVE 3 homolog 2 of Arabidopsis thaliana (Mouse-ear cress).